Consider the following 341-residue polypeptide: Dihydroorotate dehydrogenase (quinone) (341 aa).

Residues 61–65 (AGLDK) and Thr85 contribute to the FMN site. Lys65 lines the substrate pocket. Substrate is bound at residue 110-114 (NRMGF). 2 residues coordinate FMN: Asn138 and Asn171. Asn171 is a binding site for substrate. The active-site Nucleophile is Ser174. Asn176 lines the substrate pocket. FMN contacts are provided by Lys216 and Thr244. 245–246 (NT) is a binding site for substrate. Residues Gly267, Gly296, and 317–318 (YS) each bind FMN.

Belongs to the dihydroorotate dehydrogenase family. Type 2 subfamily. In terms of assembly, monomer. It depends on FMN as a cofactor.

Its subcellular location is the cell membrane. It carries out the reaction (S)-dihydroorotate + a quinone = orotate + a quinol. The protein operates within pyrimidine metabolism; UMP biosynthesis via de novo pathway; orotate from (S)-dihydroorotate (quinone route): step 1/1. Functionally, catalyzes the conversion of dihydroorotate to orotate with quinone as electron acceptor. In Pseudomonas putida (strain GB-1), this protein is Dihydroorotate dehydrogenase (quinone).